A 242-amino-acid polypeptide reads, in one-letter code: Glutathione S-transferase 3 (242 aa).

A GST N-terminal domain is found at 1-79 (MIVLHHLKNS…HLVRKYGPSF (79 aa)). In terms of domain architecture, GST C-terminal spans 85-234 (DVAELEKYEL…ERYSHPPTPP (150 aa)). S228 bears the Phosphoserine mark. Residue T232 is modified to Phosphothreonine.

It belongs to the GST superfamily. As to quaternary structure, interacts with sad1.

The protein localises to the cytoplasm. It carries out the reaction RX + glutathione = an S-substituted glutathione + a halide anion + H(+). Its function is as follows. May have a role in the detoxification of various heavy metals. The protein is Glutathione S-transferase 3 (gst3) of Schizosaccharomyces pombe (strain 972 / ATCC 24843) (Fission yeast).